The following is a 409-amino-acid chain: MPKVLHVADVHLGARPYGLEERRDDIFRSFEFVVETALKDRPDAVLIAGDLFDKPKLPLRDVKQAVELVRALTDAGIPVLAAHGEHDTPSVRDETLLSLMEASLDGFKAPLYRSGMRPGDFVVDLGSLKVAVVPFFKVPLEERRRLTLRFLREFDQISRTSSGTLVLLAHMSLDAEMQFDAVASPSDLPSGAKYAALGHLHAPRIRLDAPTPYAYPGVLDPLKVEEINTPGSPLYVDLSGDAPIIEKVKVPRRPQYRIEVDIGDGGSIYNAVNRGLRRVLANVRASREDWLKPLIHVIIKSDKPISKARVIAEARKAAGGADVLLKIHWKIVAGGEHAGTSPGLQGEGPLDLAKIAAEYYKIPLNAASTILHDLAEAAAEKDELRVREILETLATTVSQDTWKRILYMR.

Mn(2+) is bound by residues Asp-9, His-11, Asp-50, and Glu-85. Residue His-86 is the Proton donor of the active site. Positions 170, 199, and 201 each coordinate Mn(2+).

Belongs to the MRE11/RAD32 family. In terms of assembly, homodimer. Forms a heterotetramer composed of two Mre11 subunits and two Rad50 subunits. Mn(2+) serves as cofactor.

With respect to regulation, nuclease activity is regulated by Rad50. In terms of biological role, part of the Rad50/Mre11 complex, which is involved in the early steps of DNA double-strand break (DSB) repair. The complex may facilitate opening of the processed DNA ends to aid in the recruitment of HerA and NurA. Mre11 binds to DSB ends and has both double-stranded 3'-5' exonuclease activity and single-stranded endonuclease activity. This is DNA double-strand break repair protein Mre11 from Aeropyrum pernix (strain ATCC 700893 / DSM 11879 / JCM 9820 / NBRC 100138 / K1).